The primary structure comprises 896 residues: Glutamate receptor 2.4 (896 aa).

Residues 1–24 (MKRHLNDVVLVFLVFIFGVKLGKG) form the signal peptide. The Extracellular segment spans residues 25 to 565 (QNTTIQVINV…SSLIFFKPLT (541 aa)). N-linked (GlcNAc...) asparagine glycosylation is found at Asn-26, Asn-46, Asn-53, Asn-204, Asn-267, Asn-331, Asn-341, and Asn-527. The helical transmembrane segment at 566–586 (PGLWGMTLGSFFVVGFVVWIL) threads the bilayer. Residues 587-595 (EHRVNSEFT) lie on the Cytoplasmic side of the membrane. Residues 596–616 (GPPQYQISTMFWFAFSIMVFA) form a helical membrane-spanning segment. Topologically, residues 617 to 620 (PRER) are cytoplasmic. Residues 621 to 641 (VMSFTARVVVITWYFIVLVLT) traverse the membrane as a helical segment. Residues 642 to 815 (QSYTASLSSL…VSFRKLSLDS (174 aa)) are Extracellular-facing. A helical transmembrane segment spans residues 816 to 836 (FLLLFVAAATVCTLALLKFVI). Over 837–896 (CFLIQNRIILNDEFYRGKRMKEMWLKFMESDGESYISRVRSTCPQVLIQPREEDIDPING) the chain is Cytoplasmic.

Belongs to the glutamate-gated ion channel (TC 1.A.10.1) family. May form heteromers. As to expression, expressed predominantly in roots.

It is found in the membrane. In terms of biological role, glutamate-gated receptor that probably acts as a non-selective cation channel. May be involved in light-signal transduction and calcium homeostasis via the regulation of calcium influx into cells. The chain is Glutamate receptor 2.4 (GLR2.4) from Arabidopsis thaliana (Mouse-ear cress).